Consider the following 350-residue polypeptide: uncharacterized protein (350 aa).

The 164-residue stretch at 171–334 (PTVVIAGYPN…LKERLKKIAI (164 aa)) folds into the OBG-type G domain. Residues 177–184 (GYPNVGKS), 219–223 (DTPGL), and 286–289 (NKID) contribute to the GTP site.

The protein belongs to the TRAFAC class OBG-HflX-like GTPase superfamily. OBG GTPase family. NOG subfamily.

This is an uncharacterized protein from Methanocaldococcus jannaschii (strain ATCC 43067 / DSM 2661 / JAL-1 / JCM 10045 / NBRC 100440) (Methanococcus jannaschii).